The primary structure comprises 424 residues: Enolase (424 aa).

Glutamine 162 contributes to the (2R)-2-phosphoglycerate binding site. Catalysis depends on glutamate 204, which acts as the Proton donor. Mg(2+) contacts are provided by aspartate 241, glutamate 284, and aspartate 311. Residues lysine 336, arginine 365, serine 366, and lysine 387 each coordinate (2R)-2-phosphoglycerate. The Proton acceptor role is filled by lysine 336.

This sequence belongs to the enolase family. Requires Mg(2+) as cofactor.

Its subcellular location is the cytoplasm. The protein localises to the secreted. It localises to the cell surface. It carries out the reaction (2R)-2-phosphoglycerate = phosphoenolpyruvate + H2O. It participates in carbohydrate degradation; glycolysis; pyruvate from D-glyceraldehyde 3-phosphate: step 4/5. Functionally, catalyzes the reversible conversion of 2-phosphoglycerate (2-PG) into phosphoenolpyruvate (PEP). It is essential for the degradation of carbohydrates via glycolysis. This chain is Enolase, found in Sinorhizobium medicae (strain WSM419) (Ensifer medicae).